Here is a 380-residue protein sequence, read N- to C-terminus: MCAQVWLLTDRLIREDYPQVQILRALRQRCSEQDVGFRAVFLDQIAVTVVGGHLGLQLSQKPLTTFPDVVVVRVSTPSVQSDSEITILRHLEKLGCRLVNRPQSILNCINKFWTFQELAGHGVPMPDTFSYGGHEDFSKMIDEAEPLGYPVVVKSTRGHRGKAVFLARDKHHLSDICHLVRHDVPYLFQKYVKESHGKDIRVVVVGGQVIGSMLRCSTDGRMQSNCFLGGVGVKCPLTEQGKQLAIQVSNILGMDFCGIDLLIMDDGSFTVCEANANVGFLAFDQACNLDVGAIIADYAMSLLPNRQTGKMAILPGLASPREKNEPNGCVSAQGVAESVYAITNGSTSSESEPELGEARDSSVKTMGAPPAHVAQAWLQH.

Positions 115 to 300 (FQELAGHGVP…VGAIIADYAM (186 aa)) constitute an ATP-grasp domain. ATP contacts are provided by residues K154, 189–199 (QKYVKESHGKD), and R215. Mg(2+)-binding residues include D260, E273, and N275. D260, E273, and N275 together coordinate Mn(2+). S319 carries the post-translational modification Phosphoserine. The segment at 345–370 (GSTSSESEPELGEARDSSVKTMGAPP) is disordered.

Belongs to the RimK family. Requires Mg(2+) as cofactor. Mn(2+) serves as cofactor. As to expression, highly expressed in spinal cord and brain.

It is found in the cytoplasm. The enzyme catalyses N-acetyl-L-aspartate + L-glutamate + ATP = N-acetyl-L-aspartyl-L-glutamate + ADP + phosphate + H(+). It carries out the reaction N-acetyl-L-aspartate + 2 L-glutamate + 2 ATP = N-acetyl-L-aspartyl-L-glutamyl-L-glutamate + 2 ADP + 2 phosphate + 2 H(+). Functionally, catalyzes the synthesis of N-acetyl-L-aspartyl-L-glutamate (NAAG) and N-acetyl-L-aspartyl-L-glutamyl-L-glutamate. The chain is N-acetylaspartylglutamate synthase A (Rimkla) from Mus musculus (Mouse).